Here is a 419-residue protein sequence, read N- to C-terminus: Transcriptional regulator Myc-A (419 aa).

The 9aaTAD signature appears at 78–86 (EMVTEFLGG). Disordered stretches follow at residues 141 to 166 (ALSS…HGSL), 206 to 274 (SPCQ…HYSP), and 319 to 344 (NNRK…NVLE). A compositionally biased stretch (acidic residues) spans 226–245 (ESEEEPEDEDEDCDEEEEID). The span at 248–261 (TVEKRQSASKRVES) shows a compositional bias: basic and acidic residues. Polar residues predominate over residues 319–328 (NNRKCASPRS). Residues 335 to 387 (DKRKTHNVLERQRRNELKLSFFALRDQVPEVASNEKAPKVVILKKATEYAISL) enclose the bHLH domain. The tract at residues 387–415 (LQEDERRLIRETEQLKYRKEQLKQRLQQL) is leucine-zipper.

In terms of assembly, efficient DNA binding requires dimerization with another bHLH protein. Binds DNA as a heterodimer with MAX.

The protein resides in the nucleus. Its function is as follows. Transcription factor that binds DNA in a non-specific manner, yet also specifically recognizes the core sequence 5'-CAC[GA]TG-3'. Activates the transcription of growth-related genes. The chain is Transcriptional regulator Myc-A (myc-a) from Xenopus laevis (African clawed frog).